The chain runs to 453 residues: Choline kinase alpha (453 aa).

The tract at residues 22–81 (CGGSAAPTPGVGQQRDAAGELESKQLGGRSQPLALPPPPPPPLPLPPPPSPPLADEQPEP) is disordered. Residues 55-73 (ALPPPPPPPLPLPPPPSPP) show a composition bias toward pro residues. S71 bears the Phosphoserine mark. Residues 113–119 (RGGLSNM), R142, and 203–209 (QFIPSRR) contribute to the ATP site. Residue 115–117 (GLS) participates in phosphocholine binding. At K243 the chain carries N6-acetyllysine. The residue at position 275 (S275) is a Phosphoserine. ATP contacts are provided by Q304 and D326.

The protein belongs to the choline/ethanolamine kinase family. As to quaternary structure, heterodimer with CHKB. Homodimer. In terms of assembly, monomer; acetylation by KAT5 promotes dissociation of the homodimer and monomerization. In terms of processing, phosphorylated at Ser-275 by AMPK in response to glucose deprivation, leading to localization to lipid droplets. Acetylated by KAT5 at Lys-243 following phosphorylation by AMPK, leading to monomerization and conversion into a tyrosine-protein kinase. As to expression, testis, brain, lung, kidney and liver.

It is found in the cytoplasm. It localises to the cytosol. The protein resides in the lipid droplet. The enzyme catalyses choline + ATP = phosphocholine + ADP + H(+). It catalyses the reaction ethanolamine + ATP = phosphoethanolamine + ADP + H(+). The catalysed reaction is L-tyrosyl-[protein] + ATP = O-phospho-L-tyrosyl-[protein] + ADP + H(+). It functions in the pathway phospholipid metabolism; phosphatidylcholine biosynthesis; phosphocholine from choline: step 1/1. Its pathway is phospholipid metabolism; phosphatidylethanolamine biosynthesis; phosphatidylethanolamine from ethanolamine: step 1/3. Plays a key role in phospholipid biosynthesis by catalyzing the phosphorylation of free choline to phosphocholine, the first step in phosphatidylcholine biosynthesis. Also phosphorylates ethanolamine, thereby contributing to phosphatidylethanolamine biosynthesis. Has higher activity with choline. Functionally, this isoform plays a key role in lipolysis of lipid droplets following glucose deprivation. In response to glucose deprivation, phosphorylated by AMPK, promoting localization to lipid droplets. Phosphorylation is followed by acetylation by KAT5, leading to dissociation of the homodimer into a monomer. Monomeric CHKA isoform 1 is converted into a tyrosine-protein kinase, which phosphorylates lipid droplet structural proteins PLIN2 and PLIN3, leading to lipolysis of lipid droplets. The chain is Choline kinase alpha (Chka) from Rattus norvegicus (Rat).